Consider the following 338-residue polypeptide: DNA-directed RNA polymerase subunit alpha (338 aa).

The interval 1–234 (MIHKNWAELI…DQLSIFVNFE (234 aa)) is alpha N-terminal domain (alpha-NTD). Residues 250-338 (FNPLLLKKVD…DLAKRFEDQF (89 aa)) are alpha C-terminal domain (alpha-CTD).

It belongs to the RNA polymerase alpha chain family. In terms of assembly, homodimer. The RNAP catalytic core consists of 2 alpha, 1 beta, 1 beta' and 1 omega subunit. When a sigma factor is associated with the core the holoenzyme is formed, which can initiate transcription.

The catalysed reaction is RNA(n) + a ribonucleoside 5'-triphosphate = RNA(n+1) + diphosphate. Its function is as follows. DNA-dependent RNA polymerase catalyzes the transcription of DNA into RNA using the four ribonucleoside triphosphates as substrates. The sequence is that of DNA-directed RNA polymerase subunit alpha from Cereibacter sphaeroides (strain ATCC 17025 / ATH 2.4.3) (Rhodobacter sphaeroides).